Consider the following 308-residue polypeptide: Protein translocase subunit SecF (308 aa).

Transmembrane regions (helical) follow at residues 14 to 34, 134 to 154, 158 to 178, 185 to 205, 238 to 258, and 267 to 287; these read FFLL…LFGF, VYAV…RFEF, ISGI…FALL, TFVA…IVIF, SIRT…FGGI, and LIIG…PIWV.

Belongs to the SecD/SecF family. SecF subfamily. In terms of assembly, forms a complex with SecD. Part of the essential Sec protein translocation apparatus which comprises SecA, SecYEG and auxiliary proteins SecDF. Other proteins may also be involved.

Its subcellular location is the cell membrane. Functionally, part of the Sec protein translocase complex. Interacts with the SecYEG preprotein conducting channel. SecDF uses the proton motive force (PMF) to complete protein translocation after the ATP-dependent function of SecA. This Alicyclobacillus acidocaldarius subsp. acidocaldarius (strain ATCC 27009 / DSM 446 / BCRC 14685 / JCM 5260 / KCTC 1825 / NBRC 15652 / NCIMB 11725 / NRRL B-14509 / 104-IA) (Bacillus acidocaldarius) protein is Protein translocase subunit SecF.